The following is a 178-amino-acid chain: Bifunctional protein PyrR (178 aa).

A PRPP-binding motif is present at residues Val99–Thr111.

This sequence belongs to the purine/pyrimidine phosphoribosyltransferase family. PyrR subfamily. In terms of assembly, homodimer and homohexamer; in equilibrium.

The catalysed reaction is UMP + diphosphate = 5-phospho-alpha-D-ribose 1-diphosphate + uracil. Its function is as follows. Regulates transcriptional attenuation of the pyrimidine nucleotide (pyr) operon by binding in a uridine-dependent manner to specific sites on pyr mRNA. This disrupts an antiterminator hairpin in the RNA and favors formation of a downstream transcription terminator, leading to a reduced expression of downstream genes. Functionally, also displays a weak uracil phosphoribosyltransferase activity which is not physiologically significant. This Ligilactobacillus salivarius (strain UCC118) (Lactobacillus salivarius) protein is Bifunctional protein PyrR.